A 271-amino-acid polypeptide reads, in one-letter code: Purine nucleoside phosphorylase 1 (271 aa).

Phosphate is bound by residues Ser28, His59, 79–81 (RFH), and Ala111. Ser28 carries the post-translational modification Phosphoserine. Position 191 (Glu191) interacts with a purine D-ribonucleoside. Ser210 is a phosphate binding site. Asn233 contacts a purine D-ribonucleoside.

Belongs to the PNP/MTAP phosphorylase family. As to quaternary structure, homotrimer.

It catalyses the reaction a purine 2'-deoxy-D-ribonucleoside + phosphate = a purine nucleobase + 2-deoxy-alpha-D-ribose 1-phosphate. Its pathway is purine metabolism; purine nucleoside salvage. The purine nucleoside phosphorylases catalyze the phosphorolytic breakdown of the N-glycosidic bond in the beta-(deoxy)ribonucleoside molecules, with the formation of the corresponding free purine bases and pentose-1-phosphate. Cleaves guanosine, inosine, 2'-deoxyguanosine and 2'-deoxyinosine. This Bacillus subtilis (strain 168) protein is Purine nucleoside phosphorylase 1 (punA).